The chain runs to 734 residues: Photosystem I P700 chlorophyll a apoprotein A2 (734 aa).

Transmembrane regions (helical) follow at residues 46-69, 135-158, 175-199, 273-291, 330-353, 369-395, 417-439, and 517-535; these read IFAS…FHVA, LYSG…LHLQ, LNHH…HVAI, MAHH…GHMY, IHFQ…QHMY, AALY…IFFI, AIIS…LYVH, and FLVH…LILV. Cys559 and Cys568 together coordinate [4Fe-4S] cluster. 2 consecutive transmembrane segments (helical) span residues 575–596 and 643–665; these read AFYL…YWHW and LSVW…MFLI. Residues His654, Met662, and Tyr670 each coordinate chlorophyll a. Phylloquinone is bound at residue Trp671. A helical membrane pass occupies residues 707–727; the sequence is LVGLAHFSVGYIFTYAAFLIA.

It belongs to the PsaA/PsaB family. The PsaA/B heterodimer binds the P700 chlorophyll special pair and subsequent electron acceptors. PSI consists of a core antenna complex that captures photons, and an electron transfer chain that converts photonic excitation into a charge separation. The eukaryotic PSI reaction center is composed of at least 11 subunits. P700 is a chlorophyll a/chlorophyll a' dimer, A0 is one or more chlorophyll a, A1 is one or both phylloquinones and FX is a shared 4Fe-4S iron-sulfur center. serves as cofactor.

Its subcellular location is the plastid. The protein localises to the chloroplast thylakoid membrane. It catalyses the reaction reduced [plastocyanin] + hnu + oxidized [2Fe-2S]-[ferredoxin] = oxidized [plastocyanin] + reduced [2Fe-2S]-[ferredoxin]. Functionally, psaA and PsaB bind P700, the primary electron donor of photosystem I (PSI), as well as the electron acceptors A0, A1 and FX. PSI is a plastocyanin-ferredoxin oxidoreductase, converting photonic excitation into a charge separation, which transfers an electron from the donor P700 chlorophyll pair to the spectroscopically characterized acceptors A0, A1, FX, FA and FB in turn. Oxidized P700 is reduced on the lumenal side of the thylakoid membrane by plastocyanin. The sequence is that of Photosystem I P700 chlorophyll a apoprotein A2 from Lotus japonicus (Lotus corniculatus var. japonicus).